A 108-amino-acid chain; its full sequence is MGRLGPSNGLLPLLLAVGGFSLVQAQRECSCSAVSPGILAGIVLGDLVLTLLIALAVYSLGRLVPRTRGAVDVTRKQHIAETESAYQELQGQRSDVYSDLNTQRQYYK.

The first 25 residues, methionine 1 to alanine 25, serve as a signal peptide directing secretion. The Extracellular portion of the chain corresponds to glutamine 26–proline 36. The helical transmembrane segment at glycine 37–valine 57 threads the bilayer. Aspartate 46 contacts Ca(2+). Topologically, residues tyrosine 58–lysine 108 are cytoplasmic. The ITAM domain maps to arginine 75 to glutamine 103. Phosphotyrosine is present on residues tyrosine 86 and tyrosine 97.

The protein belongs to the TYROBP family. In terms of assembly, homodimer; disulfide-linked. Homotrimer; disulfide-linked. Homotetramer; disulfide-linked. Homotrimers and homotetramers form when low levels of partner receptors are available and is competitive with assembly with interacting receptors. They may represent alternative oligomerization states or may be intermediates in the receptor assembly process. Binding of a metal cation aids in homooligomerization through coordination of the metal ion by the subunits of the oligomer. Interacts with TREM1. Interacts with TREM2. Interacts with CLECSF5. Interacts with CD300LB and CD300C2. Interacts with CD300E. Interacts (via ITAM domain) with SYK (via SH2 domains); activates SYK mediating neutrophils and macrophages integrin-mediated activation. Interacts with KLRC2. Interacts with CD300H. Interacts with KLRD1. Interacts with SIGLEC1. Post-translationally, following ligand binding by associated receptors, tyrosine phosphorylated in the ITAM domain which leads to activation of additional tyrosine kinases and subsequent cell activation. Highly expressed in spleen, liver and thymus. Weakly expressed in lymph nodes. Expressed in peripheral blood leukocytes, granulocytes, macrophages, and monocytes. LPS does not increase expression in granulocytes.

The protein localises to the cell membrane. Its function is as follows. Adapter protein which non-covalently associates with activating receptors found on the surface of a variety of immune cells to mediate signaling and cell activation following ligand binding by the receptors. TYROBP is tyrosine-phosphorylated in the ITAM domain following ligand binding by the associated receptors which leads to activation of additional tyrosine kinases and subsequent cell activation. Also has an inhibitory role in some cells. Non-covalently associates with activating receptors of the CD300 family to mediate cell activation. Also mediates cell activation through association with activating receptors of the CD200R family. Required for neutrophil activation mediated by integrin. Required for the activation of myeloid cells mediated by the CLEC5A/MDL1 receptor. Associates with natural killer (NK) cell receptors such as the KLRD1/KLRC2 heterodimer to mediate NK cell activation. Associates with TREM1 to mediate activation of neutrophils and monocytes. Associates with TREM2 on monocyte-derived dendritic cells to mediate up-regulation of chemokine receptor CCR7 and dendritic cell maturation and survival. Association with TREM2 mediates cytokine-induced formation of multinucleated giant cells which are formed by the fusion of macrophages. Stabilizes the TREM2 C-terminal fragment (TREM2-CTF) produced by TREM2 ectodomain shedding which suppresses the release of pro-inflammatory cytokines. In microglia, required with TREM2 for phagocytosis of apoptotic neurons. Required with ITGAM/CD11B in microglia to control production of microglial superoxide ions which promote the neuronal apoptosis that occurs during brain development. Promotes pro-inflammatory responses in microglia following nerve injury which accelerates degeneration of injured neurons. Positively regulates the expression of the IRAK3/IRAK-M kinase and IL10 production by liver dendritic cells and inhibits their T cell allosimulatory ability. Negatively regulates B cell proliferation. Required for CSF1-mediated osteoclast cytoskeletal organization. Positively regulates multinucleation during osteoclast development. The sequence is that of TYRO protein tyrosine kinase-binding protein from Sus scrofa (Pig).